The chain runs to 105 residues: Phosphoribosyl-ATP pyrophosphatase (105 aa).

The protein belongs to the PRA-PH family.

The protein localises to the cytoplasm. It carries out the reaction 1-(5-phospho-beta-D-ribosyl)-ATP + H2O = 1-(5-phospho-beta-D-ribosyl)-5'-AMP + diphosphate + H(+). The protein operates within amino-acid biosynthesis; L-histidine biosynthesis; L-histidine from 5-phospho-alpha-D-ribose 1-diphosphate: step 2/9. In Vesicomyosocius okutanii subsp. Calyptogena okutanii (strain HA), this protein is Phosphoribosyl-ATP pyrophosphatase.